A 504-amino-acid polypeptide reads, in one-letter code: Maturase K (504 aa).

It belongs to the intron maturase 2 family. MatK subfamily.

The protein localises to the plastid. It localises to the chloroplast. Usually encoded in the trnK tRNA gene intron. Probably assists in splicing its own and other chloroplast group II introns. The sequence is that of Maturase K from Wollastonia biflora (Beach sunflower).